We begin with the raw amino-acid sequence, 248 residues long: uncharacterized protein (248 aa).

This is an uncharacterized protein from Sinorhizobium fredii (strain NBRC 101917 / NGR234).